The chain runs to 319 residues: Carbonic anhydrase 6 (319 aa).

The N-terminal stretch at 1-14 is a signal peptide; sequence MITLLFLLVVGAQA. Positions 16-273 constitute an Alpha-carbonic anhydrase domain; the sequence is HEWTYSEGVL…LNHRVVEANF (258 aa). A disulfide bond links Cys37 and Cys219. Residue Asn62 is glycosylated (N-linked (GlcNAc...) asparagine). The Proton donor/acceptor role is filled by His80. Positions 106, 108, and 133 each coordinate Zn(2+). 215-216 is a substrate binding site; the sequence is TT. The N-linked (GlcNAc...) asparagine glycan is linked to Asn251.

Belongs to the alpha-carbonic anhydrase family. It depends on Zn(2+) as a cofactor. As to expression, major constituent of saliva.

The protein resides in the secreted. The enzyme catalyses hydrogencarbonate + H(+) = CO2 + H2O. Its function is as follows. Reversible hydration of carbon dioxide. Its role in saliva is unknown. The protein is Carbonic anhydrase 6 (CA6) of Bos taurus (Bovine).